Here is a 1237-residue protein sequence, read N- to C-terminus: MTWIPLHCHSQYSILDATCSIKKFVAKAVEYHIPALALTDHGNLFGAVDFYKTCKQNAIKPIIGCELYVAPSSRFDKKKERKSQVANHLILLCKDEEGYRNLCLLSSLAYTEGFYYFPRIDRELLKQHSKGLICLSACLSGSIAQAALESEEALEKDLLWYQDLFQEDFFSEVQLHKSSEEKIALFEEEWLRQNYYQFIEKQLKVKDAVLTVSKRLGISSVATNDIHYLDPDDWLAHEILLNVQSREPIRTAKQNTYVPNPKRKTYPSREFYFKSPQEMAELFADHPETISNTLIVADRCNLELDFVTKHYPIYVPEDLQKKGSYSEEERYNASSAFLEQLCEQGLKTKYTPELLGHIAQKFPEKDPLTVVKERLSLESTIIISKGMCDYLLIVWDIINWAKDHGIPVGPGRGSGAGSVMLFLLGITEIEPIRFDLFFERFINPERLSYPDIDIDICMIGREKVINYAIERHGKENVAQIITFGTMKAKMAIKDVGRTLDTPLSKVNLIAKKIPDLNATIASALESDPDLRQLYIDDAEAAEIIDMAKKLEGSIRNTGVHAAGVIICGDPLTNHIPICVPKDSSMISTQYSMKPVESVGMLKVDFLGLKTLTSIHVATKAIYKKTGILLQAATLPLNDRNTFSLLHQGKTMGIFQMESRGMQELAKNLRPDAFEEIIAIGALYRPGPMDMIPSFINRKHGKENIEYDHPLMEPILKETFGIMVYQEQVMQIAGSLAKYSLGEGDVLRRAMGKKDHEQMVKEREKFCSRASANGIDPSIATTIFDKMEKFASYGFNKSHAAAYGLITYTTAYLKANYPKEWLAALLTCDYDDIEKVGKLIQEAHSMNIPVLPPDINESGQDFEATQEGIRFSLGAVKGVGVSIVDSIVEEREKNGPYRSLQDFVQRSDFKKVTKKQLESLVDAGSFNCFEPNKDLAIAILNDLYDTFSREKKEAATGVLTFFSLNSMTKDPVKVTISPENIVRRSDKELLKREKELLGVYLTAHPMDAVKHLLPFLSVVQSKDFEGLPHGSVVRTVFLIDKVTTKISSVEHKKFALLQVSDEEDSYELPIWSDMYAEYQDLLEEDRLIYAILTIDRRSDSLRLSCRWMRDLSSVNDTVITECDEVYDRLKNQKIYSSTKKSTGGQSQAMVKKEEPKAIPPVTISLDLNRLRHSHLFTLKGLIRKYSGSRALSLVFTKDNQRIASISPDSDFFVTEDISAFLQEIETTDIPARILATAV.

Belongs to the DNA polymerase type-C family. DnaE subfamily. As to quaternary structure, DNA polymerase III contains a core (composed of alpha, epsilon and theta chains) that associates with a tau subunit. This core dimerizes to form the PolIII' complex. PolIII' associates with the gamma complex (composed of gamma, delta, delta', psi and chi chains) and with the beta chain to form the complete DNA polymerase III complex.

It is found in the cytoplasm. It catalyses the reaction DNA(n) + a 2'-deoxyribonucleoside 5'-triphosphate = DNA(n+1) + diphosphate. Its function is as follows. DNA polymerase III is a complex, multichain enzyme responsible for most of the replicative synthesis in bacteria. This DNA polymerase also exhibits 3' to 5' exonuclease activity. The alpha chain is the DNA polymerase. This Chlamydia muridarum (strain MoPn / Nigg) protein is DNA polymerase III subunit alpha (dnaE).